The following is a 390-amino-acid chain: MNIHEYQAKEIFRKYGVPTPRGGVAFTGPEARRVAEELGGNLWVVKAQIHAGGRGKAGGVKLAKSLDEVEKIAEEMLGMTLVTHQTGPEGKVVKKVYIEEGADIKDELYLGMVLDRALEMPVMMASTEGGMEIEEVAEKTPEKIIKVAIDPAIGFQPFHARKLAFGLGLPKDEQREFIKFASALYNVYMDNDAEMIEINPLIKTGDGKFLALDAKMGFDDNALYKHPEIAEMRDLDEEEPTEVEAKKYGLSYIKLDGNVGCMVNGAGLAMATMDIIKHEGGEPANFLDVGGGANPDTVAKGFEIILSDPNVKSIFVNIFGGIVRCDRIANGILQATEKVEVNVPVIVRLDGTNAEEAAEILRNANIKNIIPAENLKDGAKKAVAAAKGEL.

One can recognise an ATP-grasp domain in the interval 9–244 (KEIFRKYGVP…LDEEEPTEVE (236 aa)). ATP-binding positions include Lys46, 53–55 (GRG), Glu99, Ala102, and Glu107. Mg(2+) is bound by residues Asn199 and Asp213. Substrate-binding positions include Asn264 and 321-323 (GIV).

It belongs to the succinate/malate CoA ligase beta subunit family. In terms of assembly, heterotetramer of two alpha and two beta subunits. Requires Mg(2+) as cofactor.

It carries out the reaction succinate + ATP + CoA = succinyl-CoA + ADP + phosphate. The catalysed reaction is GTP + succinate + CoA = succinyl-CoA + GDP + phosphate. It participates in carbohydrate metabolism; tricarboxylic acid cycle; succinate from succinyl-CoA (ligase route): step 1/1. Its function is as follows. Succinyl-CoA synthetase functions in the citric acid cycle (TCA), coupling the hydrolysis of succinyl-CoA to the synthesis of either ATP or GTP and thus represents the only step of substrate-level phosphorylation in the TCA. The beta subunit provides nucleotide specificity of the enzyme and binds the substrate succinate, while the binding sites for coenzyme A and phosphate are found in the alpha subunit. This is Succinate--CoA ligase [ADP-forming] subunit beta from Nautilia profundicola (strain ATCC BAA-1463 / DSM 18972 / AmH).